The chain runs to 398 residues: Acetate kinase (398 aa).

Asparagine 8 provides a ligand contact to Mg(2+). Lysine 15 provides a ligand contact to ATP. Substrate is bound at residue arginine 89. Aspartate 146 acts as the Proton donor/acceptor in catalysis. ATP contacts are provided by residues 206 to 210, 283 to 285, and 331 to 335; these read HIGNG, DMR, and GMGEN. Residue glutamate 383 coordinates Mg(2+).

The protein belongs to the acetokinase family. As to quaternary structure, homodimer. It depends on Mg(2+) as a cofactor. Mn(2+) serves as cofactor.

The protein resides in the cytoplasm. The enzyme catalyses acetate + ATP = acetyl phosphate + ADP. The protein operates within metabolic intermediate biosynthesis; acetyl-CoA biosynthesis; acetyl-CoA from acetate: step 1/2. In terms of biological role, catalyzes the formation of acetyl phosphate from acetate and ATP. Can also catalyze the reverse reaction. This Streptococcus pyogenes serotype M4 (strain MGAS10750) protein is Acetate kinase.